We begin with the raw amino-acid sequence, 263 residues long: Inner membrane protein YpjD (263 aa).

Residues 1–3 (MPV) lie on the Periplasmic side of the membrane. A helical membrane pass occupies residues 4–23 (FALLALVAYSVSLALIVPGL). Topologically, residues 24–34 (LQKNGGWRRMA) are cytoplasmic. A helical transmembrane segment spans residues 35–54 (IISAVIALVCHAIALEARIL). Residues 55–63 (PDGDSGQNL) lie on the Periplasmic side of the membrane. The helical transmembrane segment at 64–83 (SLLNVGSLVSLMICTVMTIV) threads the bilayer. Residues 84-89 (ASRNRG) are Cytoplasmic-facing. A helical transmembrane segment spans residues 90–109 (WLLLPIVYAFALINLALATF). The Periplasmic portion of the chain corresponds to 110-123 (MPNEYITHLEATPG). A helical membrane pass occupies residues 124–146 (MLVHIGLSLFSYATLIIAALYAL). Topologically, residues 147–181 (QLAWIDYQLKNKKLAFNQEMPPLMSIERKMFHITQ) are cytoplasmic. Residues 182 to 201 (IGVVLLTLTLCTGLFYMHNL) form a helical membrane-spanning segment. The Periplasmic portion of the chain corresponds to 202–210 (FSMENIDKA). A helical transmembrane segment spans residues 211–228 (VLSIVAWFVYIVLLWGHY). The Cytoplasmic portion of the chain corresponds to 229–236 (HEGWRGRR). Residues 237–259 (VVWFNVAGAVILTLAYFGSRIVQ) traverse the membrane as a helical segment. Over 260 to 263 (QLIS) the chain is Periplasmic.

It localises to the cell inner membrane. In Escherichia coli O157:H7, this protein is Inner membrane protein YpjD (ypjD).